The primary structure comprises 1013 residues: Putative helicase mov-10-B.1 (1013 aa).

2 stretches are compositionally biased toward polar residues: residues 91–103 and 113–123; these read QWSR…QNHA and RPSTTRVSDPS. The disordered stretch occupies residues 91–129; the sequence is QWSRPYRSQQNHATPHLNDAISRPSTTRVSDPSSVPEPE. Residue 550–557 participates in ATP binding; the sequence is GPPGTGKT. A DEAG box motif is present at residues 672–675; it reads DEAG.

This sequence belongs to the DNA2/NAM7 helicase family. SDE3 subfamily.

It is found in the cytoplasm. Its subcellular location is the P-body. The catalysed reaction is ATP + H2O = ADP + phosphate + H(+). Its function is as follows. Probable RNA helicase. Required for RNA-mediated gene silencing by the RNA-induced silencing complex (RISC). Required for both miRNA-mediated translational repression and miRNA-mediated cleavage of complementary mRNAs by RISC. The chain is Putative helicase mov-10-B.1 (mov10b.1) from Danio rerio (Zebrafish).